The chain runs to 169 residues: Ribosome maturation factor RimM (169 aa).

Residues N92–N166 enclose the PRC barrel domain.

This sequence belongs to the RimM family. As to quaternary structure, binds ribosomal protein uS19.

It is found in the cytoplasm. An accessory protein needed during the final step in the assembly of 30S ribosomal subunit, possibly for assembly of the head region. Essential for efficient processing of 16S rRNA. May be needed both before and after RbfA during the maturation of 16S rRNA. It has affinity for free ribosomal 30S subunits but not for 70S ribosomes. The chain is Ribosome maturation factor RimM from Buchnera aphidicola subsp. Cinara cedri (strain Cc).